We begin with the raw amino-acid sequence, 125 residues long: Synaptobrevin (125 aa).

The disordered stretch occupies residues 1 to 46; the sequence is MSGPQNPQAGPGGPPSGPPQPGGPPGPPQGPPQPVQQSKRLQQTQA. The Cytoplasmic portion of the chain corresponds to 1–103; it reads MSGPQNPQAG…KRKFWWKNCK (103 aa). A compositionally biased stretch (pro residues) spans 12-34; that stretch reads GGPPSGPPQPGGPPGPPQGPPQP. A v-SNARE coiled-coil homology domain is found at 40 to 100; that stretch reads RLQQTQAQVE…GKLKRKFWWK (61 aa). A helical; Anchor for type IV membrane protein membrane pass occupies residues 104–123; it reads MMIILGGIVAVIVTVIIVWA. The Vesicular portion of the chain corresponds to 124-125; sequence AT.

This sequence belongs to the synaptobrevin family.

Its subcellular location is the cytoplasmic vesicle. The protein localises to the secretory vesicle. It localises to the synaptic vesicle membrane. The protein resides in the synapse. It is found in the synaptosome. Intrinsic membrane protein of small synaptic vesicles. The chain is Synaptobrevin from Doryteuthis pealeii (Longfin inshore squid).